The following is a 950-amino-acid chain: Xylosyltransferase 1 (950 aa).

The Cytoplasmic portion of the chain corresponds to 1–17 (MVAAPSARRLVRRSHSA). A helical; Signal-anchor for type II membrane protein membrane pass occupies residues 18 to 38 (LLAALTVLLLQTLVGWNFSSL). Residues 39 to 950 (HSGAGERRGG…GAVKPDGRLR (912 aa)) are Lumenal-facing. A disordered region spans residues 42–246 (AGERRGGAAA…ELRYDQPPKC (205 aa)). Residues 91–104 (PPARARARALAGCP) are compositionally biased toward low complexity. Basic and acidic residues predominate over residues 134–150 (KVRTDSNNENSVPKDFE). The segment covering 152–161 (VDNSNFAPRT) has biased composition (polar residues). Positions 166–193 (HQPELAKKPPSRQKELLKRRLEQEEKGK) are enriched in basic and acidic residues. An N-linked (GlcNAc...) asparagine glycan is attached at N215. 4 disulfides stabilise this stretch: C246–C274, C290–C531, C550–C563, and C552–C561. UDP-alpha-D-xylose contacts are provided by residues V322, D350, and 379–381 (TIW). The N-linked (GlcNAc...) asparagine glycan is linked to N410. Position 483–484 (483–484 (DW)) interacts with UDP-alpha-D-xylose. UDP-alpha-D-xylose contacts are provided by residues S564 and 587–588 (RK). 2 cysteine pairs are disulfide-bonded: C664/C918 and C911/C924. A glycan (N-linked (GlcNAc...) asparagine) is linked at N768. Residues 931–950 (SFSPDPKSELGAVKPDGRLR) form a disordered region.

It belongs to the glycosyltransferase 14 family. XylT subfamily. Monomer. A divalent metal cation is required as a cofactor. In terms of processing, contains 7 disulfide bonds. Post-translationally, N-glycosylated.

It localises to the golgi apparatus membrane. It catalyses the reaction UDP-alpha-D-xylose + L-seryl-[protein] = 3-O-(beta-D-xylosyl)-L-seryl-[protein] + UDP + H(+). The protein operates within glycan metabolism; chondroitin sulfate biosynthesis. It functions in the pathway glycan metabolism; heparan sulfate biosynthesis. Catalyzes the first step in the biosynthesis of chondroitin sulfate and dermatan sulfate proteoglycans, such as DCN. Transfers D-xylose from UDP-D-xylose to specific serine residues of the core protein. Required for normal maturation of chondrocytes during bone development, normal onset of ossification and normal embryonic and postnatal skeleton development, especially of the long bones. This chain is Xylosyltransferase 1 (XYLT1), found in Canis lupus familiaris (Dog).